The following is a 952-amino-acid chain: GATA zinc finger domain-containing protein 5 (952 aa).

2 disordered regions span residues 1 to 36 and 138 to 197; these read MDYQ…DSPS and PTPL…SPKQ. The segment covering 10–24 has biased composition (polar residues); sequence QISQEFPTDISTTKS. Over residues 148–157 the composition is skewed to pro residues; the sequence is SPPPPPPPPA. A compositionally biased stretch (low complexity) spans 158–196; the sequence is ATTTTTITTTTTTSAGNSTTKNNNNNNNNNNNNNGKSPK. A GATA-type zinc finger spans residues 241–266; sequence CYQCNTSNTPEWRKGPEGPATLCNAC. 4 disordered regions span residues 380–418, 433–478, 634–699, and 732–816; these read MTPS…HEQP, LLSS…GGGG, QNNS…NKNN, and QQQE…LSVN. Basic residues predominate over residues 393-412; the sequence is KTTKTKPKPKSKSKPGKITH. The segment covering 445–467 has biased composition (low complexity); that stretch reads SSSSSCGTSLNSSLGSSSGTITN. Residues 468–478 are compositionally biased toward gly residues; the sequence is SGGGSSGGGGG. Polar residues predominate over residues 634–653; sequence QNNSFSGPNDQNPYVPSVSL. Composition is skewed to low complexity over residues 654–668, 678–699, and 732–745; these read NSNK…NNNK, NNKN…NKNN, and QQQE…EQQQ. The span at 746–762 shows a compositional bias: polar residues; it reads NLSINNSNQTNENEILG. Positions 763–814 are enriched in low complexity; the sequence is TTTTTTTSTATIITSQVPMNLSPNSDDNQSSSNYSTLSDSGSSPTDSFSGLS.

The sequence is that of GATA zinc finger domain-containing protein 5 (gtaE) from Dictyostelium discoideum (Social amoeba).